A 566-amino-acid chain; its full sequence is Alpha-amylase (566 aa).

A signal peptide spans 1–28; it reads MARRLATASLAVLAAAATALTAPTPAAA. Ca(2+) is bound by residues N120, Q166, and D175. The active-site Nucleophile is D205. H209 is a Ca(2+) binding site. The active-site Proton donor is the E232. Residues 465 to 566 enclose the CBM20 domain; sequence GPGTGQTSAS…ALTLNDTWRG (102 aa).

It belongs to the glycosyl hydrolase 13 family. In terms of assembly, monomer. The cofactor is Ca(2+).

The catalysed reaction is Endohydrolysis of (1-&gt;4)-alpha-D-glucosidic linkages in polysaccharides containing three or more (1-&gt;4)-alpha-linked D-glucose units.. This is Alpha-amylase (amy) from Streptomyces griseus.